We begin with the raw amino-acid sequence, 159 residues long: Large ribosomal subunit protein uL22 (159 aa).

It belongs to the universal ribosomal protein uL22 family. As to quaternary structure, part of the 50S ribosomal subunit.

This protein binds specifically to 23S rRNA. It makes multiple contacts with different domains of the 23S rRNA in the assembled 50S subunit and ribosome. In terms of biological role, the globular domain of the protein is located near the polypeptide exit tunnel on the outside of the subunit, while an extended beta-hairpin is found that lines the wall of the exit tunnel in the center of the 70S ribosome. This chain is Large ribosomal subunit protein uL22, found in Methanopyrus kandleri (strain AV19 / DSM 6324 / JCM 9639 / NBRC 100938).